Reading from the N-terminus, the 49-residue chain is Large ribosomal subunit protein bL33 (49 aa).

The protein belongs to the bacterial ribosomal protein bL33 family.

In Clostridium acetobutylicum (strain ATCC 824 / DSM 792 / JCM 1419 / IAM 19013 / LMG 5710 / NBRC 13948 / NRRL B-527 / VKM B-1787 / 2291 / W), this protein is Large ribosomal subunit protein bL33.